Reading from the N-terminus, the 414-residue chain is MNVTVRFLRPFARYLVPYTFHRTRSNSYSRVLQRYVSSKVPSLPCHNKDSTSPPEQLELDGWKTTMKSSIQENGVSVVSDKDEDSLAATRELIEMWRLLGKEVPEHITEEELKTLMECASKSAKKKYLRYLYGKEMMKKAKQMKKEMKAAAREEAKRARSLEPSTGEEQRDFMFLRLWDRQTNIALGWKGVQAMQFGQPLVFDMAYDNYMKPSELQNTVSQLLESEGWNRRNVDPFHIYFCNLEVDGAYHRELVKRYGEKWDKLLLTATEKSPVDLFPKDSIIYLTADSPNVMTTFKHDKIYIIGSFVDKNTQTGTSLAKAKRQNLATECLPLDKYLQWDVGNKNLTLDQMIRILLCLKNTGNWEEALKFVPRRKHTGYLEVPEHSQAAFRKLKKTKTLNSFRKGSLNVHMWKR.

The N-terminal 35 residues, 1–35 (MNVTVRFLRPFARYLVPYTFHRTRSNSYSRVLQRY), are a transit peptide targeting the mitochondrion. The residue at position 79 (Ser79) is a Phosphoserine. Positions 133–162 (GKEMMKKAKQMKKEMKAAAREEAKRARSLE) form a coiled coil. In terms of domain architecture, SAM-dependent MTase TRM10-type spans 186–378 (LGWKGVQAMQ…KFVPRRKHTG (193 aa)).

Belongs to the class IV-like SAM-binding methyltransferase superfamily. TRM10 family. In terms of assembly, component of mitochondrial ribonuclease P, a complex composed of TRMT10C/MRPP1, HSD17B10/MRPP2 and PRORP/MRPP3. Interacts with HSD17B10/MRPP2; forming the MRPP1-MRPP2 subcomplex of the mitochondrial ribonuclease P complex. Interacts with GRSF1.

The protein resides in the mitochondrion matrix. It is found in the mitochondrion nucleoid. The catalysed reaction is adenosine(9) in tRNA + S-adenosyl-L-methionine = N(1)-methyladenosine(9) in tRNA + S-adenosyl-L-homocysteine + H(+). The enzyme catalyses guanosine(9) in tRNA + S-adenosyl-L-methionine = N(1)-methylguanosine(9) in tRNA + S-adenosyl-L-homocysteine + H(+). It carries out the reaction an adenosine in mRNA + S-adenosyl-L-methionine = an N(1)-methyladenosine in mRNA + S-adenosyl-L-homocysteine + H(+). Its function is as follows. Mitochondrial tRNA N(1)-methyltransferase involved in mitochondrial tRNA maturation. Component of mitochondrial ribonuclease P, a complex composed of TRMT10C/MRPP1, HSD17B10/MRPP2 and PRORP/MRPP3, which cleaves tRNA molecules in their 5'-ends. Together with HSD17B10/MRPP2, forms a subcomplex of the mitochondrial ribonuclease P, named MRPP1-MRPP2 subcomplex, which displays functions that are independent of the ribonuclease P activity. The MRPP1-MRPP2 subcomplex catalyzes the formation of N(1)-methylguanine and N(1)-methyladenine at position 9 (m1G9 and m1A9, respectively) in tRNAs; TRMT10C/MRPP1 acting as the catalytic N(1)-methyltransferase subunit. The MRPP1-MRPP2 subcomplex also acts as a tRNA maturation platform: following 5'-end cleavage by the mitochondrial ribonuclease P complex, the MRPP1-MRPP2 subcomplex enhances the efficiency of 3'-processing catalyzed by ELAC2, retains the tRNA product after ELAC2 processing and presents the nascent tRNA to the mitochondrial CCA tRNA nucleotidyltransferase TRNT1 enzyme. In addition to tRNA N(1)-methyltransferase activity, TRMT10C/MRPP1 also acts as a mRNA N(1)-methyltransferase by mediating methylation of adenosine residues at the N(1) position of MT-ND5 mRNA. Associates with mitochondrial DNA complexes at the nucleoids to initiate RNA processing and ribosome assembly. This Rattus norvegicus (Rat) protein is tRNA methyltransferase 10 homolog C.